Reading from the N-terminus, the 346-residue chain is Uroporphyrinogen decarboxylase (346 aa).

Substrate-binding positions include 26-30 (RQAGR), Asp76, Tyr153, Ser208, and His323.

It belongs to the uroporphyrinogen decarboxylase family. In terms of assembly, homodimer.

The protein resides in the cytoplasm. The enzyme catalyses uroporphyrinogen III + 4 H(+) = coproporphyrinogen III + 4 CO2. It participates in porphyrin-containing compound metabolism; protoporphyrin-IX biosynthesis; coproporphyrinogen-III from 5-aminolevulinate: step 4/4. Catalyzes the decarboxylation of four acetate groups of uroporphyrinogen-III to yield coproporphyrinogen-III. The chain is Uroporphyrinogen decarboxylase from Prochlorococcus marinus (strain MIT 9215).